We begin with the raw amino-acid sequence, 349 residues long: GDSL esterase/lipase At2g19050 (349 aa).

Positions 1-23 are cleaved as a signal peptide; that stretch reads MAEAIFKALLLVIATTAFATTEA. Residue S38 is the Nucleophile of the active site. N49 carries an N-linked (GlcNAc...) asparagine glycan. Catalysis depends on residues D316 and H319.

This sequence belongs to the 'GDSL' lipolytic enzyme family.

It localises to the secreted. This Arabidopsis thaliana (Mouse-ear cress) protein is GDSL esterase/lipase At2g19050.